Reading from the N-terminus, the 671-residue chain is DNA ligase (671 aa).

Residues 32–36 (DAEYD), 81–82 (SL), and glutamate 113 contribute to the NAD(+) site. The active-site N6-AMP-lysine intermediate is the lysine 115. NAD(+) contacts are provided by arginine 136, glutamate 173, lysine 290, and lysine 314. The Zn(2+) site is built by cysteine 408, cysteine 411, cysteine 426, and cysteine 432. The 79-residue stretch at 593-671 (EIDSPFAGKT…EAEMLRLLGS (79 aa)) folds into the BRCT domain.

The protein belongs to the NAD-dependent DNA ligase family. LigA subfamily. Mg(2+) serves as cofactor. Requires Mn(2+) as cofactor.

The enzyme catalyses NAD(+) + (deoxyribonucleotide)n-3'-hydroxyl + 5'-phospho-(deoxyribonucleotide)m = (deoxyribonucleotide)n+m + AMP + beta-nicotinamide D-nucleotide.. In terms of biological role, DNA ligase that catalyzes the formation of phosphodiester linkages between 5'-phosphoryl and 3'-hydroxyl groups in double-stranded DNA using NAD as a coenzyme and as the energy source for the reaction. It is essential for DNA replication and repair of damaged DNA. The protein is DNA ligase of Shigella flexneri serotype 5b (strain 8401).